Here is a 204-residue protein sequence, read N- to C-terminus: Cytochrome c biogenesis ATP-binding export protein CcmA (204 aa).

Positions 3–204 (LSGHGLRCVR…ARELRIGGTT (202 aa)) constitute an ABC transporter domain. 35–42 (GPNGAGKT) contacts ATP.

The protein belongs to the ABC transporter superfamily. CcmA exporter (TC 3.A.1.107) family. As to quaternary structure, the complex is composed of two ATP-binding proteins (CcmA) and two transmembrane proteins (CcmB).

It is found in the cell inner membrane. It catalyses the reaction heme b(in) + ATP + H2O = heme b(out) + ADP + phosphate + H(+). Functionally, part of the ABC transporter complex CcmAB involved in the biogenesis of c-type cytochromes; once thought to export heme, this seems not to be the case, but its exact role is uncertain. Responsible for energy coupling to the transport system. The chain is Cytochrome c biogenesis ATP-binding export protein CcmA from Nitrobacter hamburgensis (strain DSM 10229 / NCIMB 13809 / X14).